We begin with the raw amino-acid sequence, 208 residues long: 2-phospho-L-lactate guanylyltransferase (208 aa).

It belongs to the CofC family. In terms of assembly, homodimer.

The enzyme catalyses (2S)-2-phospholactate + GTP + H(+) = (2S)-lactyl-2-diphospho-5'-guanosine + diphosphate. It functions in the pathway cofactor biosynthesis; coenzyme F420 biosynthesis. Guanylyltransferase that catalyzes the activation of (2S)-2-phospholactate (2-PL) as (2S)-lactyl-2-diphospho-5'-guanosine, via the condensation of 2-PL with GTP. It is involved in the biosynthesis of coenzyme F420, a hydride carrier cofactor. In Haloarcula marismortui (strain ATCC 43049 / DSM 3752 / JCM 8966 / VKM B-1809) (Halobacterium marismortui), this protein is 2-phospho-L-lactate guanylyltransferase.